Here is a 627-residue protein sequence, read N- to C-terminus: Carene synthase, chloroplastic (627 aa).

The transit peptide at 1 to 36 (MSVISIMPLASKPCLNKSFISSTHEPKALRRPISTV) directs the protein to the chloroplast. Mg(2+) contacts are provided by Asp-378, Asp-382, and Asp-530. Residues 378 to 382 (DDMYD) carry the DDXXD motif motif.

Belongs to the terpene synthase family. Tpsd subfamily. Requires Mg(2+) as cofactor. Mn(2+) is required as a cofactor.

The protein resides in the plastid. Its subcellular location is the chloroplast. The enzyme catalyses (2E)-geranyl diphosphate = (+)-car-3-ene + diphosphate. Its pathway is terpene metabolism; oleoresin biosynthesis. In terms of biological role, terpene synthase (TPS) involved in defensive oleoresin formation in conifers in response to insect attack or other injury. The polypeptide is Carene synthase, chloroplastic (3CAR) (Picea glauca (White spruce)).